The primary structure comprises 317 residues: MDFKDYYKILGVEPTADEKAIKAAYRKLARKYHPDVSKERDAEEKFKEANEAYEVLGDAQKRAEFDEIRKYGGQHGRPFQAPPGWENRGGAGGGFEGGDFSDFFSSIFGARGGNPFGGARQQRSAGRRGQDVELELAIFLEETLSKESKQISFQVPQTNAAGQRTGFTTKTLNVKIPAGVSDGERIRLKGQGAPGSAGGANGDLFLTIRMAPHPLFDVEGQDLIITVPLAPWEAALGTKVAVPTLDGKINLTIRPDSQSGQRLRVPGKGLANKQGERGNLYAQLKVVMPPASDASTRQLWTQLSEKAAFNPRTQWSK.

Residues 5 to 69 (DYYKILGVEP…QKRAEFDEIR (65 aa)) form the J domain.

It is found in the cytoplasm. It localises to the nucleoid. Functionally, DNA-binding protein that preferentially recognizes a curved DNA sequence. It is probably a functional analog of DnaJ; displays overlapping activities with DnaJ, but functions under different conditions, probably acting as a molecular chaperone in an adaptive response to environmental stresses other than heat shock. Lacks autonomous chaperone activity; binds native substrates and targets them for recognition by DnaK. Its activity is inhibited by the binding of CbpM. This is Curved DNA-binding protein from Pseudomonas putida (strain W619).